A 347-amino-acid polypeptide reads, in one-letter code: NADH-ubiquinone oxidoreductase chain 2 (347 aa).

11 helical membrane-spanning segments follow: residues 3–23 (PPIF…VMTS), 25–45 (HWML…PILM), 59–79 (YFLT…INLL), 96–116 (ILMT…FWVP), 122–142 (ISLS…LSIL), 149–169 (INPH…GWGG), 178–198 (IMAY…LYNP), 201–221 (MFLN…LFML), 237–257 (APLI…LPPL), 274–294 (EMII…YFYM), and 323–343 (TIFL…TPMI).

This sequence belongs to the complex I subunit 2 family. As to quaternary structure, core subunit of respiratory chain NADH dehydrogenase (Complex I) which is composed of 45 different subunits. Interacts with TMEM242.

It localises to the mitochondrion inner membrane. The catalysed reaction is a ubiquinone + NADH + 5 H(+)(in) = a ubiquinol + NAD(+) + 4 H(+)(out). Core subunit of the mitochondrial membrane respiratory chain NADH dehydrogenase (Complex I) which catalyzes electron transfer from NADH through the respiratory chain, using ubiquinone as an electron acceptor. Essential for the catalytic activity and assembly of complex I. The polypeptide is NADH-ubiquinone oxidoreductase chain 2 (Viverra tangalunga (Malayan civet)).